A 305-amino-acid polypeptide reads, in one-letter code: Cytochrome c biogenesis protein CcsA (305 aa).

A run of 8 helical transmembrane segments spans residues 11-31, 36-56, 75-95, 97-117, 142-162, 212-232, 239-259, and 273-293; these read ANASFALLLITMLIYGMKAIF, ILQLFGTLGILFSNFLVALLL, LMFLCWCFTFFHLLIEKYIQI, FIGFITVPIAMLVNAFATFFL, IMMASYAALILGSLLSIAFLF, TIGIGFPLLTIGIISGAVWAN, WSWDPKETWALITWIIFAIYL, and AIVAFIGFVIVWVCYLGVNLL.

Belongs to the CcmF/CycK/Ccl1/NrfE/CcsA family. In terms of assembly, may interact with Ccs1.

It localises to the plastid. It is found in the chloroplast thylakoid membrane. Functionally, required during biogenesis of c-type cytochromes (cytochrome c6 and cytochrome f) at the step of heme attachment. The chain is Cytochrome c biogenesis protein CcsA from Mesostigma viride (Green alga).